Here is a 261-residue protein sequence, read N- to C-terminus: Small ribosomal subunit protein eS4B (261 aa).

Ser-32 is subject to Phosphoserine. Residues 42 to 105 (LPLIVFLRNR…NENFRLVYDV (64 aa)) form the S4 RNA-binding domain. A Glycyl lysine isopeptide (Lys-Gly) (interchain with G-Cter in ubiquitin) cross-link involves residue Lys-62. Thr-115 is modified (phosphothreonine). Glycyl lysine isopeptide (Lys-Gly) (interchain with G-Cter in ubiquitin) cross-links involve residues Lys-134, Lys-161, Lys-168, Lys-174, Lys-179, Lys-211, and Lys-233. Phosphoserine is present on Ser-247.

Belongs to the eukaryotic ribosomal protein eS4 family. As to quaternary structure, component of the small ribosomal subunit (SSU). Mature yeast ribosomes consist of a small (40S) and a large (60S) subunit. The 40S small subunit contains 1 molecule of ribosomal RNA (18S rRNA) and 33 different proteins (encoded by 57 genes). The large 60S subunit contains 3 rRNA molecules (25S, 5.8S and 5S rRNA) and 46 different proteins (encoded by 81 genes).

It is found in the cytoplasm. In terms of biological role, component of the ribosome, a large ribonucleoprotein complex responsible for the synthesis of proteins in the cell. The small ribosomal subunit (SSU) binds messenger RNAs (mRNAs) and translates the encoded message by selecting cognate aminoacyl-transfer RNA (tRNA) molecules. The large subunit (LSU) contains the ribosomal catalytic site termed the peptidyl transferase center (PTC), which catalyzes the formation of peptide bonds, thereby polymerizing the amino acids delivered by tRNAs into a polypeptide chain. The nascent polypeptides leave the ribosome through a tunnel in the LSU and interact with protein factors that function in enzymatic processing, targeting, and the membrane insertion of nascent chains at the exit of the ribosomal tunnel. The polypeptide is Small ribosomal subunit protein eS4B (Saccharomyces cerevisiae (strain ATCC 204508 / S288c) (Baker's yeast)).